Consider the following 416-residue polypeptide: Interleukin-1 receptor type 2 (416 aa).

The N-terminal stretch at 1-13 (MFILLVLVTGVSA) is a signal peptide. The Extracellular segment spans residues 14–355 (FTTPAVVHTG…FQSLHTTVKE (342 aa)). 3 Ig-like C2-type domains span residues 29–136 (PVTS…LELK), 146–233 (PLVS…YNIT), and 249–357 (PVII…KEVS). 3 disulfides stabilise this stretch: Cys-42-Cys-128, Cys-64-Cys-120, and Cys-164-Cys-219. N-linked (GlcNAc...) asparagine glycosylation is found at Asn-124, Asn-208, Asn-231, and Asn-289. Cys-270 and Cys-338 form a disulfide bridge. A helical transmembrane segment spans residues 356-381 (VSSTFSWGIALAPLSLIILVVGAIWI). The Cytoplasmic segment spans residues 382 to 416 (RRRCKRQAGKTYGLTKLPTDNQDFPSSPNQIKEMK). Residues 396–416 (TKLPTDNQDFPSSPNQIKEMK) form a disordered region. The span at 399–416 (PTDNQDFPSSPNQIKEMK) shows a compositional bias: polar residues.

The protein belongs to the interleukin-1 receptor family. As to quaternary structure, associates with IL1RAP to form a non-signaling interleukin-1 receptor complex. In terms of processing, a soluble form (sIL1R2) can also be produced by proteolytic cleavage at the cell surface (shedding) involving a metalloproteinase.

It is found in the membrane. The protein resides in the cell membrane. Its subcellular location is the secreted. Non-signaling receptor for IL1A, IL1B and IL1RN. Reduces IL1B activities. Serves as a decoy receptor by competitive binding to IL1B and preventing its binding to IL1R1. Also modulates cellular response through non-signaling association with IL1RAP after binding to IL1B. IL1R2 (membrane and secreted forms) preferentially binds IL1B and poorly IL1A and IL1RN. The secreted IL1R2 recruits secreted IL1RAP with high affinity; this complex formation may be the dominant mechanism for neutralization of IL1B by secreted/soluble receptors. The sequence is that of Interleukin-1 receptor type 2 (Il1r2) from Rattus norvegicus (Rat).